Reading from the N-terminus, the 282-residue chain is NADPH-dependent 7-cyano-7-deazaguanine reductase (282 aa).

Position 88–90 (88–90) interacts with substrate; the sequence is IES. Residue 90–91 participates in NADPH binding; that stretch reads SK. The active-site Thioimide intermediate is the C190. The active-site Proton donor is the D197. A substrate-binding site is contributed by 229-230; it reads HE. Residue 258 to 259 participates in NADPH binding; sequence RG.

This sequence belongs to the GTP cyclohydrolase I family. QueF type 2 subfamily. In terms of assembly, homodimer.

The protein resides in the cytoplasm. It catalyses the reaction 7-aminomethyl-7-carbaguanine + 2 NADP(+) = 7-cyano-7-deazaguanine + 2 NADPH + 3 H(+). It functions in the pathway tRNA modification; tRNA-queuosine biosynthesis. Functionally, catalyzes the NADPH-dependent reduction of 7-cyano-7-deazaguanine (preQ0) to 7-aminomethyl-7-deazaguanine (preQ1). The protein is NADPH-dependent 7-cyano-7-deazaguanine reductase of Escherichia coli (strain UTI89 / UPEC).